We begin with the raw amino-acid sequence, 564 residues long: Periplasmic [NiFe] hydrogenase large subunit (564 aa).

Ni(2+) contacts are provided by C72, C75, C543, and C546. Positions 550–564 (VIEPETNEILKFKVC) are excised as a propeptide.

Belongs to the [NiFe]/[NiFeSe] hydrogenase large subunit family. As to quaternary structure, heterodimer of a large and a small subunit. Requires Ni(2+) as cofactor.

The protein resides in the periplasm. It catalyses the reaction 2 Fe(III)-[cytochrome c3] + H2 = 2 Fe(II)-[cytochrome c3] + 2 H(+). The protein is Periplasmic [NiFe] hydrogenase large subunit (hydB) of Solidesulfovibrio fructosivorans (Desulfovibrio fructosivorans).